Here is a 105-residue protein sequence, read N- to C-terminus: Urease subunit beta (105 aa).

Belongs to the urease beta subunit family. In terms of assembly, heterotrimer of UreA (gamma), UreB (beta) and UreC (alpha) subunits. Three heterotrimers associate to form the active enzyme.

It localises to the cytoplasm. The catalysed reaction is urea + 2 H2O + H(+) = hydrogencarbonate + 2 NH4(+). The protein operates within nitrogen metabolism; urea degradation; CO(2) and NH(3) from urea (urease route): step 1/1. This chain is Urease subunit beta, found in Pseudomonas entomophila (strain L48).